The chain runs to 330 residues: Probable deoxyhypusine synthase (330 aa).

Residues 1–25 (MTGDDADETHENVVPGSDEDLDTPD) are disordered. The active-site Nucleophile is the K298.

It belongs to the deoxyhypusine synthase family. Requires NAD(+) as cofactor.

The catalysed reaction is [eIF5A protein]-L-lysine + spermidine = [eIF5A protein]-deoxyhypusine + propane-1,3-diamine. The protein operates within protein modification; eIF5A hypusination. In terms of biological role, catalyzes the NAD-dependent oxidative cleavage of spermidine and the subsequent transfer of the butylamine moiety of spermidine to the epsilon-amino group of a specific lysine residue of the eIF-5A precursor protein to form the intermediate deoxyhypusine residue. This chain is Probable deoxyhypusine synthase, found in Halobacterium salinarum (strain ATCC 29341 / DSM 671 / R1).